The following is a 250-amino-acid chain: Methionine aminopeptidase (250 aa).

Residue histidine 77 participates in substrate binding. Aspartate 94, aspartate 105, and histidine 169 together coordinate a divalent metal cation. Residue histidine 176 participates in substrate binding. A divalent metal cation-binding residues include glutamate 202 and glutamate 235.

It belongs to the peptidase M24A family. Methionine aminopeptidase type 1 subfamily. Monomer. The cofactor is Co(2+). Zn(2+) serves as cofactor. It depends on Mn(2+) as a cofactor. Requires Fe(2+) as cofactor.

It catalyses the reaction Release of N-terminal amino acids, preferentially methionine, from peptides and arylamides.. In terms of biological role, removes the N-terminal methionine from nascent proteins. The N-terminal methionine is often cleaved when the second residue in the primary sequence is small and uncharged (Met-Ala-, Cys, Gly, Pro, Ser, Thr, or Val). Requires deformylation of the N(alpha)-formylated initiator methionine before it can be hydrolyzed. The polypeptide is Methionine aminopeptidase (Mycoplasmoides gallisepticum (strain R(low / passage 15 / clone 2)) (Mycoplasma gallisepticum)).